Consider the following 60-residue polypeptide: Venom protein 4.1 (60 aa).

The signal sequence occupies residues 1–26 (MKALCAILLVLFACSVMFEHFSISTA).

This sequence belongs to the non-disulfide-bridged peptide (NDBP) superfamily. In terms of tissue distribution, expressed by the venom gland.

The protein localises to the secreted. The sequence is that of Venom protein 4.1 from Lychas mucronatus (Chinese swimming scorpion).